Here is a 479-residue protein sequence, read N- to C-terminus: Kynurenine 3-monooxygenase (479 aa).

FAD-binding positions include V19, 37–40 (YEAR), and A57. Positions 85 and 99 each coordinate L-kynurenine. FAD contacts are provided by residues R111, L136, T172, D304, and 317-318 (MN). Positions 363 and 398 each coordinate L-kynurenine. A run of 2 helical transmembrane segments spans residues 385-404 (FLHAIMPSTFIPLYTMVAFT) and 425-445 (GLFVLGSLIAIGGTYLLVHHL).

It belongs to the aromatic-ring hydroxylase family. KMO subfamily. The cofactor is FAD. Expressed by organs containing secondary lymphoid tissue, such as the lung, spleen, mesenteric lymph node, thymus and peripheral lymph nodes.

It is found in the mitochondrion outer membrane. The catalysed reaction is L-kynurenine + NADPH + O2 + H(+) = 3-hydroxy-L-kynurenine + NADP(+) + H2O. The protein operates within cofactor biosynthesis; NAD(+) biosynthesis; quinolinate from L-kynurenine: step 1/3. Catalyzes the hydroxylation of L-kynurenine (L-Kyn) to form 3-hydroxy-L-kynurenine (L-3OHKyn). Required for synthesis of quinolinic acid, a neurotoxic NMDA receptor antagonist and potential endogenous inhibitor of NMDA receptor signaling in axonal targeting, synaptogenesis and apoptosis during brain development. Quinolinic acid may also affect NMDA receptor signaling in pancreatic beta cells, osteoblasts, myocardial cells, and the gastrointestinal tract. The chain is Kynurenine 3-monooxygenase from Mus musculus (Mouse).